The sequence spans 622 residues: MRYLGNKTNLLNFIQQVIKKHDIQGQTFADLFAGTGSVGDYFKGEYTVLSNDYMYFSKVISEAKLLNSEKPKFDSFVKRYGKTPFQWLNEREYTPNDGYFVYNNYTPRAERMYLTEENALKIDGMRLDIEELFQEGVISKAEYSYLLASLLESVTKVSNTSGTYQAFFKFWESRALKKFTIMPLEMKDSLSVSKDNRCFNKNTNRLVREISGDIAYIDPPYTITQYTNSYHVLETIARYDNPELFGKTGRRVKREFSGYSNKSKAYYEFEDLFRQINFTHVLVSYSNQSIVPLDELVDLARRFAVDGIVEVETNEYREYSTNNSSMKGEGKKLQEVIIYFKKNLETNKSPLNYAGSKDDVIPRIFKLLPKHVTTFVDAMGGAFNVGANRTALNKVVYNEYHPFVFEMMQMIVNTPADELIRNVEQIVTRYSLEKKGKEAFNRLRDHYNNEEQTPINLYTLNIYSFQNILRFNQAKKYNTPIGNNEFNEGYKDRITRFVTRAPEVEMRLGSYSAINFNEYDDDTVFYFDPPYLVTTAGYNDGKRGFDGWDAEQEASLLKYLTELDSAGKKFMLSNVLEHKGKTNHLLMEWIQHHGFNVNTIGETGIKYPRREILVTNYNTFER.

Belongs to the N(4)/N(6)-methyltransferase family.

The catalysed reaction is a 2'-deoxyadenosine in DNA + S-adenosyl-L-methionine = an N(6)-methyl-2'-deoxyadenosine in DNA + S-adenosyl-L-homocysteine + H(+). In terms of biological role, an alpha subtype methylase that modifies unknown specific adenine residues, and protects the DNA from cleavage by the LlaI endonuclease. The polypeptide is Modification methylase LlaI (Lactococcus lactis subsp. lactis (Streptococcus lactis)).